The chain runs to 307 residues: Fructokinase (307 aa).

This sequence belongs to the carbohydrate kinase PfkB family.

The enzyme catalyses D-fructose + ATP = D-fructose 6-phosphate + ADP + H(+). The protein is Fructokinase (scrK) of Vibrio alginolyticus.